A 159-amino-acid chain; its full sequence is uncharacterized protein (159 aa).

The protein belongs to the IIV-6 136R family.

This is an uncharacterized protein from Invertebrate iridescent virus 3 (IIV-3).